Here is a 484-residue protein sequence, read N- to C-terminus: tRNA-2-methylthio-N(6)-dimethylallyladenosine synthase (484 aa).

Residues glycine 36–glutamate 153 enclose the MTTase N-terminal domain. Positions 45, 82, 116, 190, 194, and 197 each coordinate [4Fe-4S] cluster. The region spanning arginine 176–serine 415 is the Radical SAM core domain. The region spanning glutamine 416–leucine 479 is the TRAM domain. The interval glutamate 428–phenylalanine 450 is disordered.

It belongs to the methylthiotransferase family. MiaB subfamily. Monomer. It depends on [4Fe-4S] cluster as a cofactor.

It localises to the cytoplasm. It carries out the reaction N(6)-dimethylallyladenosine(37) in tRNA + (sulfur carrier)-SH + AH2 + 2 S-adenosyl-L-methionine = 2-methylsulfanyl-N(6)-dimethylallyladenosine(37) in tRNA + (sulfur carrier)-H + 5'-deoxyadenosine + L-methionine + A + S-adenosyl-L-homocysteine + 2 H(+). Its function is as follows. Catalyzes the methylthiolation of N6-(dimethylallyl)adenosine (i(6)A), leading to the formation of 2-methylthio-N6-(dimethylallyl)adenosine (ms(2)i(6)A) at position 37 in tRNAs that read codons beginning with uridine. This Xanthomonas oryzae pv. oryzae (strain KACC10331 / KXO85) protein is tRNA-2-methylthio-N(6)-dimethylallyladenosine synthase.